Consider the following 235-residue polypeptide: Elongation factor Tu, chloroplastic (235 aa).

In terms of domain architecture, tr-type G spans 1 to 125; it reads KNMITGAAQM…EVDNYIPLPT (125 aa). 47 to 50 is a GTP binding site; the sequence is NKAD.

It belongs to the TRAFAC class translation factor GTPase superfamily. Classic translation factor GTPase family. EF-Tu/EF-1A subfamily.

It localises to the plastid. It is found in the chloroplast. It catalyses the reaction GTP + H2O = GDP + phosphate + H(+). GTP hydrolase that promotes the GTP-dependent binding of aminoacyl-tRNA to the A-site of ribosomes during protein biosynthesis. This Bryopsis plumosa (Green alga) protein is Elongation factor Tu, chloroplastic (tufA).